Reading from the N-terminus, the 134-residue chain is Salivary protein 15 Iric-1 (134 aa).

The first 21 residues, 1 to 21, serve as a signal peptide directing secretion; it reads MESFVAMKVVCITVLFVIVAV. N-linked (GlcNAc...) asparagine glycosylation occurs at N22. The tract at residues 48-67 is required for Borrelia OspC-binding; that stretch reads PSYIRNPQKLALELLEICKN. Residues N91 and N103 are each glycosylated (N-linked (GlcNAc...) asparagine). The interval 115-134 is CD4-binding; it reads GPNGETCAEKSKCVGHIPGC.

It belongs to the salp15 family. As to quaternary structure, monomer. Interacts with host CD4. Interacts with host DC-SIGN (CD209). (Microbial infection) Interacts with Borrelia outer surface protein C (OspC). Expressed in salivary glands. Detected in fed adult female.

The protein localises to the secreted. Functionally, salivary tick protein that downregulates host immune system by binding to both dendritic cells, and CD4(+) T cells. Specifically binds to the CD4 coreceptor on T cells. This interaction prevents the activation of the Src kinase, Lck, and its downstream substrate Zap-70, and results in deficient activation of PLCgamma1, the repression of calcium fluxes triggered by T-cell antigen receptor (TCR) ligation, and a subsequent reduction in interleukin-2 production. This salivary protein also binds to DC-SIGN (CD209) on dendritic cells (DC) and activates the Raf-1 kinase/MEK signaling pathway that results in down-regulating expression of pro-inflammatory cytokines. Furthermore, it inhibits T cell proliferation induced by DCs. In addition, it inhibits in vitro keratinocyte inflammation induced by Borrelia burgdorferi or by the major outer surface protein (OspC) of Borrelia. In addition, it downregulates chemokines and monocyte chemoattractant protein 1, as well as several antimicrobial peptides such as defensins, cathelicidin, psoriasin, and RNase 7. Apart from its immunomodulatory activities, it is also associated with protection of Borrelia spirochetes from antibody-mediated killing through its binding to OspC. In vivo, tests on different immune disease animal models show promising therapeutic results, e.g., in inhibiting HIV infection, experimental autoimmune encephalomyelitis, transplantation rejection, and asthma. Its function is as follows. (Microbial infection) Protects Borrelia garinii (strain VSBP) from host complement-mediated killing by binding to the surface of spirochetes and preventing deposition of host C5b-9 membrane attack complexes. Protects Borrelia garinii (strain A87S) from host complement-mediated killing. (Microbial infection) Partially protects Borrelia burgdorferi (strains VS215 and B31) from host complement-mediated killing. The sequence is that of Salivary protein 15 Iric-1 from Ixodes ricinus (Common tick).